A 147-amino-acid polypeptide reads, in one-letter code: Cyclic di-AMP receptor B (147 aa).

In terms of domain architecture, CBS spans 18–78 (MIEADKVAHV…SIFGLERIEF (61 aa)). Lysine 23, alanine 25, threonine 46, alanine 47, and arginine 131 together coordinate 3',3'-c-di-AMP.

As to quaternary structure, homodimer. Forms a homodimer with a parallel, head-to-head assembly of the monomers. Under conditions of potassium starvation and corresponding low c-di-AMP levels, apo-DarB specifically interacts with the N-terminal region of the RelA. Under the same conditions, apo-DarB also specifically interacts with the C-terminal part of the pyruvate carboxylase.

With respect to regulation, binds c-di-AMP. Binding of c-di-AMP to DarB inhibits the interaction with RelA and PYC. In terms of biological role, involved in the c-di-AMP-dependent regulation of the bacterial stringent response. Modulates the activities of at least two enzymes under conditions of potassium limitation. Apo-DarB regulates the activity of the GTP pyrophosphokinase RelA by interacting directly with RelA, leading to stimulation of (p)ppGpp synthesis and induction of the stringent response. Apo-DarB also regulates pyruvate carboxylase (PYC) at two levels: directly at the protein level by binding to the enzyme and stimulating the synthesis of oxaloacetate and indirectly, by interaction with RelA, which leads to activation of the stringent response and to the increased expression of the pycA gene. Stimulation of these enzymes by DarB is prevented in the presence of cyclic di-AMP (c-di-AMP). The chain is Cyclic di-AMP receptor B from Bacillus subtilis (strain 168).